The following is a 531-amino-acid chain: Cytochrome c oxidase subunit 1 (531 aa).

A helical membrane pass occupies residues Ile18–Ile38. Residues Glu41 and Gly46 each contribute to the Ca(2+) site. The next 6 helical transmembrane spans lie at Val59–Gly79, Ile103–Thr123, Ala149–Val169, Pro185–Leu205, Leu237–Ile257, and Ile269–Val289. Residue His64 coordinates Fe(II)-heme a. His243 contacts Cu cation. Positions His243–Tyr247 form a cross-link, 1'-histidyl-3'-tyrosine (His-Tyr). Residue Tyr247 coordinates O2. Cu cation is bound by residues His292 and His293. The next 2 helical transmembrane spans lie at Met312–Gly332 and Met340–Leu360. Mg(2+) is bound by residues His370 and Asp371. His378 lines the heme a3 pocket. His380 provides a ligand contact to Fe(II)-heme a. The next 2 membrane-spanning stretches (helical) occupy residues Met385–Leu405 and Val414–Gly434. Pro443 is a Ca(2+) binding site. A helical transmembrane segment spans residues Trp458 to Leu478.

It belongs to the heme-copper respiratory oxidase family. Component of the cytochrome c oxidase (complex IV, CIV), a multisubunit enzyme composed of a catalytic core of 3 subunits and several supernumerary subunits. The complex exists as a monomer or a dimer and forms supercomplexes (SCs) in the inner mitochondrial membrane with ubiquinol-cytochrome c oxidoreductase (cytochrome b-c1 complex, complex III, CIII). Heme is required as a cofactor. The cofactor is Cu cation.

Its subcellular location is the mitochondrion inner membrane. The enzyme catalyses 4 Fe(II)-[cytochrome c] + O2 + 8 H(+)(in) = 4 Fe(III)-[cytochrome c] + 2 H2O + 4 H(+)(out). Its pathway is energy metabolism; oxidative phosphorylation. Functionally, component of the cytochrome c oxidase, the last enzyme in the mitochondrial electron transport chain which drives oxidative phosphorylation. The respiratory chain contains 3 multisubunit complexes succinate dehydrogenase (complex II, CII), ubiquinol-cytochrome c oxidoreductase (cytochrome b-c1 complex, complex III, CIII) and cytochrome c oxidase (complex IV, CIV), that cooperate to transfer electrons derived from NADH and succinate to molecular oxygen, creating an electrochemical gradient over the inner membrane that drives transmembrane transport and the ATP synthase. Cytochrome c oxidase is the component of the respiratory chain that catalyzes the reduction of oxygen to water. Electrons originating from reduced cytochrome c in the intermembrane space (IMS) are transferred via the dinuclear copper A center (CU(A)) of subunit 2 and heme A of subunit 1 to the active site in subunit 1, a binuclear center (BNC) formed by heme A3 and copper B (CU(B)). The BNC reduces molecular oxygen to 2 water molecules using 4 electrons from cytochrome c in the IMS and 4 protons from the mitochondrial matrix. The chain is Cytochrome c oxidase subunit 1 (COX1) from Candida albicans (strain SC5314 / ATCC MYA-2876) (Yeast).